A 384-amino-acid chain; its full sequence is GDP-mannose transporter (384 aa).

Topologically, residues 1–40 are cytoplasmic; the sequence is MVEDKKTDDYTIEMDKMDQGSKNFEAAAPPPQPRTPPAGS. Residues 41–61 traverse the membrane as a helical segment; the sequence is ISNNPILPVLAYCGSSILMTV. Residues 62 to 69 are Lumenal-facing; that stretch reads MNKYVLSG. Residues 70-90 form a helical membrane-spanning segment; that stretch reads LDFNLNFFLLCVQSIVCIVAI. The Cytoplasmic segment spans residues 91–110; that stretch reads QTCKSCGLITYRDFSADEAR. A helical membrane pass occupies residues 111 to 127; sequence KWFPITLLLIGMIYTGS. The Lumenal portion of the chain corresponds to 128–134; sequence KALQFLS. The helical transmembrane segment at 135–151 threads the bilayer; that stretch reads IPVYTIFKNLTIILIAY. At 152-160 the chain is on the cytoplasmic side; it reads GEVLWFGGS. Residues 161-182 form a helical membrane-spanning segment; sequence VTGLTLFSFGLMVLSSIIAAWA. The Lumenal portion of the chain corresponds to 183–200; the sequence is DIKHAVESTGDATAKVST. Residues 201-221 form a helical membrane-spanning segment; that stretch reads LNAGYIWMLVNCLCTSSYVLG. Residues 222–236 are Cytoplasmic-facing; sequence MRKRIKLTNFKDFDT. A helical membrane pass occupies residues 237–257; the sequence is LAMFYNNLLSIPVLIVLTGLM. The Lumenal portion of the chain corresponds to 258–276; it reads EDWSSANITRNFPPADRNN. The N-linked (GlcNAc...) asparagine glycan is linked to Asn264. The chain crosses the membrane as a helical span at residues 277 to 297; that stretch reads IIFAMILSGLSSVFISYTSAW. At 298 to 305 the chain is on the cytoplasmic side; that stretch reads CVRVTSST. The helical transmembrane segment at 306-326 threads the bilayer; it reads TYSMVGALNKLPIALSGLIFF. The Lumenal segment spans residues 327–329; the sequence is DAP. A helical transmembrane segment spans residues 330–350; it reads VTFPSVSAIVVGFVSGIVYAV. The Cytoplasmic segment spans residues 351–384; it reads AKIKQNAKPKTGVLPMSNPPVSASSQSMRDSLRS. The disordered stretch occupies residues 364–384; it reads LPMSNPPVSASSQSMRDSLRS. Residues 369–384 show a composition bias toward polar residues; that stretch reads PPVSASSQSMRDSLRS.

Belongs to the TPT transporter family. SLC35D subfamily. As to quaternary structure, homooligomer.

It localises to the golgi apparatus membrane. Its subcellular location is the cytoplasmic vesicle membrane. The protein resides in the endoplasmic reticulum membrane. Involved in the import of GDP-mannose from the cytoplasm into the Golgi lumen. The chain is GDP-mannose transporter (gmt1) from Aspergillus terreus (strain NIH 2624 / FGSC A1156).